A 3313-amino-acid polypeptide reads, in one-letter code: Cadherin EGF LAG seven-pass G-type receptor 3 (3313 aa).

The first 31 residues, 1-31 (MARRPLWWGLPGPSTPLLLLLLFSLFPSSRE), serve as a signal peptide directing secretion. The Extracellular segment spans residues 32–2538 (EMGGGGDQGW…RLEGDLELLA (2507 aa)). Disordered regions lie at residues 148 to 187 (LPLD…RNGR) and 205 to 269 (EPGH…RMRS). Over residues 258–268 (HESRTAPERMR) the composition is skewed to basic and acidic residues. 9 Cadherin domains span residues 317-424 (PQYN…APVF), 425-536 (EQAQ…APQF), 537-642 (SEKR…SPIF), 643-747 (VSTP…RPEF), 748-849 (TMKE…RPVF), 850-952 (QSAH…APQF), 953-1058 (VASH…APVF), 1059-1160 (PAEE…SPVL), and 1161-1257 (NNFQ…VVII). N-linked (GlcNAc...) asparagine glycosylation is present at asparagine 623. The N-linked (GlcNAc...) asparagine glycan is linked to asparagine 838. 4 N-linked (GlcNAc...) asparagine glycosylation sites follow: asparagine 1173, asparagine 1213, asparagine 1308, and asparagine 1318. The EGF-like 1; calcium-binding domain maps to 1366–1424 (DDNVCLREPCENYMKCVSVLRFDSSAPFLASASTLFRPIQPIAGLRCRCPPGFTGDFCE). Cystine bridges form between cysteine 1370–cysteine 1381, cysteine 1375–cysteine 1412, cysteine 1414–cysteine 1423, cysteine 1430–cysteine 1441, cysteine 1435–cysteine 1450, cysteine 1452–cysteine 1461, cysteine 1470–cysteine 1481, cysteine 1475–cysteine 1491, and cysteine 1493–cysteine 1504. An EGF-like 2; calcium-binding domain is found at 1426–1462 (ELDLCYSNPCRNGGACARREGGYTCVCRPRFTGEDCE). Residues 1466-1505 (EAGRCVPGVCRNGGTCTNAPNGGFRCQCPAGGAFEGPRCE) enclose the EGF-like 3; calcium-binding domain. A Laminin G-like 1 domain is found at 1506–1710 (VAARSFPPSS…VANNGTTAGC (205 aa)). N-linked (GlcNAc...) asparagine glycans are attached at residues asparagine 1640 and asparagine 1704. Cystine bridges form between cysteine 1684–cysteine 1710, cysteine 1717–cysteine 1728, cysteine 1722–cysteine 1737, and cysteine 1739–cysteine 1748. The EGF-like 4; calcium-binding domain occupies 1713 to 1749 (KSHFCASGPCKNGGLCSERWGGFSCDCPVGFGGKDCR). In terms of domain architecture, Laminin G-like 2 spans 1753-1935 (AHPYHFQGNG…SHRINVEPGC (183 aa)). N-linked (GlcNAc...) asparagine glycosylation is present at asparagine 1761. Intrachain disulfides connect cysteine 1906-cysteine 1935, cysteine 1941-cysteine 1952, cysteine 1946-cysteine 1961, cysteine 1963-cysteine 1972, cysteine 1976-cysteine 1987, cysteine 1981-cysteine 1999, cysteine 2001-cysteine 2010, cysteine 2018-cysteine 2031, and cysteine 2033-cysteine 2043. Residues 1937 to 1972 (VTNPCASGPCPPHANCKDLWQTFSCTCWPGYYGPGC) form the EGF-like 5; calcium-binding domain. Aspartate 1954 is subject to (3R)-3-hydroxyaspartate. The 39-residue stretch at 1973-2011 (VDACLLNPCQNQGSCRHLQGGPHGYTCDCASGYFGQHCE) folds into the EGF-like 6; calcium-binding domain. The EGF-like 7; calcium-binding domain occupies 2012 to 2044 (HRMDQQCPRGWWGSPTCGPCNCDVHKGFDPNCN). The N-linked (GlcNAc...) asparagine glycan is linked to asparagine 2044. The 36-residue stretch at 2046 to 2081 (TSGQCHCKEFHYRPRGSDSCLPCDCYPVGSTSRSCA) folds into the EGF-like 8; calcium-binding domain. Disulfide bonds link cysteine 2050–cysteine 2065, cysteine 2052–cysteine 2068, cysteine 2070–cysteine 2080, cysteine 2089–cysteine 2098, and cysteine 2101–cysteine 2113. A Laminin EGF-like domain is found at 2068–2115 (CDCYPVGSTSRSCAPHSGQCPCRPGALGRQCNSCDSPFAEVTASGCRV). At tyrosine 2117 the chain carries Phosphotyrosine. Asparagine 2173, asparagine 2192, asparagine 2382, asparagine 2472, and asparagine 2504 each carry an N-linked (GlcNAc...) asparagine glycan. The tract at residues 2356-2395 (HTHVLLPSQSPQPSPSEVLPTSSNAENATASGVVSPPAPL) is disordered. The GAIN-B domain maps to 2364–2528 (QSPQPSPSEV…GVLMDASPRE (165 aa)). The segment covering 2374–2387 (LPTSSNAENATASG) has biased composition (polar residues). 2 cysteine pairs are disulfide-bonded: cysteine 2478–cysteine 2510 and cysteine 2498–cysteine 2512. Residues 2478 to 2528 (CVQWDPPGPADQHGMWTARDCELVHRNGSHARCRCSRTGTFGVLMDASPRE) form a GPS region. Residues 2539-2559 (VFTHVVVAASVTALVLTAAVL) traverse the membrane as a helical segment. The Cytoplasmic portion of the chain corresponds to 2560–2570 (LSLRSLKSNVR). The chain crosses the membrane as a helical span at residues 2571–2591 (GIHANVAAALGVAELLFLLGI). Topologically, residues 2592–2599 (HRTHNQLL) are extracellular. The chain crosses the membrane as a helical span at residues 2600-2620 (CTVVAILLHYFFLSTFAWLLV). Over 2621-2641 (QGLHLYRMQVEPRNVDRGAMR) the chain is Cytoplasmic. A helical membrane pass occupies residues 2642–2662 (FYHALGWGVPAVLLGLAVGLD). Residues 2663–2679 (PEGYGNPDFCWISIHEP) are Extracellular-facing. A helical membrane pass occupies residues 2680 to 2700 (LIWSFAGPIVLVIVMNGIMFL). Residues 2701 to 2724 (LAARTSCSTGQREAKKTSVLRTLR) lie on the Cytoplasmic side of the membrane. A helical membrane pass occupies residues 2725–2745 (SSFLLLLLVSASWLFGLLAVN). At 2746–2752 (HSVLAFH) the chain is on the extracellular side. A helical transmembrane segment spans residues 2753–2773 (YLHAGLCGLQGLAVLLLFCVL). The Cytoplasmic segment spans residues 2774-3313 (NADARAAWTP…SEVPRSEGHS (540 aa)). 2 disordered regions span residues 2887-2927 (AGAD…RPLR) and 2977-3004 (SNKD…RAQR). Positions 2889–2899 (ADSDSDSDLSL) are enriched in acidic residues. Positions 2918-2927 (TRGRFQRPLR) are enriched in basic residues. Position 3050 is a phosphotyrosine (tyrosine 3050). Disordered regions lie at residues 3091–3242 (APVL…PSTE) and 3255–3313 (NSSA…EGHS). Serine 3098 is subject to Phosphoserine. A compositionally biased stretch (basic and acidic residues) spans 3102-3119 (SQERLDTAPARLEPRDRG). Low complexity-rich tracts occupy residues 3178-3197 (QRPL…SLSR) and 3255-3289 (NSSA…PSTP). Positions 3290–3301 (RSATSHSISELS) are enriched in polar residues.

It belongs to the G-protein coupled receptor 2 family. LN-TM7 subfamily. In terms of processing, the iron and 2-oxoglutarate dependent 3-hydroxylation of aspartate and asparagine is (R) stereospecific within EGF domains. Expressed in the brain. Expressed in cerebellum, olfactory bulb, cerebral cortex, hippocampus and brain stem.

It is found in the cell membrane. Receptor that may have an important role in cell/cell signaling during nervous system formation. This chain is Cadherin EGF LAG seven-pass G-type receptor 3 (Celsr3), found in Rattus norvegicus (Rat).